Here is a 453-residue protein sequence, read N- to C-terminus: Na(+)/H(+) antiporter NhaA (453 aa).

11 helical membrane-spanning segments follow: residues 22–42 (ASLL…SPWA), 72–92 (MLAF…GLEI), 108–128 (LLPI…YMLV), 137–157 (GAAI…GLLG), 166–186 (IFLT…IALF), 189–209 (GHIA…LYVG), 218–238 (LFFY…GIHP), 316–336 (PLVN…VTFG), 343–363 (LVNV…LGIF), 386–406 (LFGV…IANL), and 424–444 (LGVF…LKWV).

This sequence belongs to the NhaA Na(+)/H(+) (TC 2.A.33) antiporter family.

It localises to the cell inner membrane. It catalyses the reaction Na(+)(in) + 2 H(+)(out) = Na(+)(out) + 2 H(+)(in). Na(+)/H(+) antiporter that extrudes sodium in exchange for external protons. This is Na(+)/H(+) antiporter NhaA from Parabacteroides distasonis (strain ATCC 8503 / DSM 20701 / CIP 104284 / JCM 5825 / NCTC 11152).